Here is a 412-residue protein sequence, read N- to C-terminus: MIEEEVLKIIKPTEEDKKGIEKVLEIIRERLNKLDFEVEGSFRKGTWLRQDTDIDVFVFYPKDVGKEYLERNALNDIINRIKDLDYTLAYAEHPYVIVNINNVEVDIVPALRVESGDKAITAVDRTPFHTKYVTSHLDERGKDEVRLLKRFMKGIGVYGAELKVQGFSGYATELLIIYYGNFRKVLEEASKWKHPIKIELTKPMKIFSEPLIIPDPVDPKRNVTAAVSLKNIATFSIAAKYYLKNPSIEFFFPSKKVEEKVKGDVLILRLNLDEKSSEDIVWGQIKRSVNKIERALKQYGFRVIDVQAWGDTNNITIAVQLESKNIGQYYLNIGPQYYSETIEDFIQKNDNIWVGEDGRLYSIKERKEYDAETIAKKNIVLKVKYNIESYWLQNTEDQQIMKFLRKTPTWLK.

Residues serine 41 and lysine 44 each contribute to the ATP site. CTP is bound by residues serine 41 and lysine 44. Residues aspartate 53, aspartate 55, and aspartate 106 each contribute to the Mg(2+) site. Residues histidine 129, lysine 149, and tyrosine 158 each coordinate ATP. Residues histidine 129, lysine 149, and tyrosine 158 each contribute to the CTP site.

The protein belongs to the tRNA nucleotidyltransferase/poly(A) polymerase family. Archaeal CCA-adding enzyme subfamily. In terms of assembly, homodimer. The cofactor is Mg(2+).

The enzyme catalyses a tRNA precursor + 2 CTP + ATP = a tRNA with a 3' CCA end + 3 diphosphate. It carries out the reaction a tRNA with a 3' CCA end + 2 CTP + ATP = a tRNA with a 3' CCACCA end + 3 diphosphate. Catalyzes the addition and repair of the essential 3'-terminal CCA sequence in tRNAs without using a nucleic acid template. Adds these three nucleotides in the order of C, C, and A to the tRNA nucleotide-73, using CTP and ATP as substrates and producing inorganic pyrophosphate. tRNA 3'-terminal CCA addition is required both for tRNA processing and repair. Also involved in tRNA surveillance by mediating tandem CCA addition to generate a CCACCA at the 3' terminus of unstable tRNAs. While stable tRNAs receive only 3'-terminal CCA, unstable tRNAs are marked with CCACCA and rapidly degraded. The polypeptide is CCA-adding enzyme (Saccharolobus islandicus (strain M.16.27) (Sulfolobus islandicus)).